We begin with the raw amino-acid sequence, 333 residues long: Geminin coiled-coil domain-containing protein 1 (333 aa).

Residues 83-118 adopt a coiled-coil conformation; sequence QLYRNKQLQDTLLQKEEELARLHEENNHLRQYLNST. A compositionally biased stretch (basic residues) spans 145-154; the sequence is KEKRKPKEHR. The interval 145-165 is disordered; it reads KEKRKPKEHRHSPAEIPQFKT.

The protein belongs to the GEMC1 family. Highly phosphorylated by CDK2; stimulates initiation of DNA replication.

Its subcellular location is the nucleus. Regulator of DNA replication. Promotes initiation of chromosomal DNA replication by mediating TOPBP1- and CDK2-dependent recruitment of CDC45L onto replication origins. The sequence is that of Geminin coiled-coil domain-containing protein 1 (Gmnc) from Mus musculus (Mouse).